Consider the following 230-residue polypeptide: Cytidylate kinase (230 aa).

12 to 20 (GPSGTGKST) provides a ligand contact to ATP.

It belongs to the cytidylate kinase family. Type 1 subfamily.

The protein localises to the cytoplasm. The catalysed reaction is CMP + ATP = CDP + ADP. It catalyses the reaction dCMP + ATP = dCDP + ADP. This chain is Cytidylate kinase, found in Corynebacterium efficiens (strain DSM 44549 / YS-314 / AJ 12310 / JCM 11189 / NBRC 100395).